The primary structure comprises 473 residues: MSLRPGRAHPLAASPLHTPLPARPRPQLRLSTSTSCAAMKSYRLSELSDAEVGGLKARPRIDFSSIFGTVNPIVEDVRMRGDAAVKDYTVKFDKVALDDVVVRVSDLPDVELDPAVKEAFDVAYDNIYAFHVSQKLPEKTVENMKGVRCKRITRCIGSVGLYVPGGTAVLPSTALMLAVPAQIAGCKTVVLATPPSRDGSICKEVLYCAKKAGVTHVLKAGGAQAISAMAWGTVSCPKVEKIFGPGNQYVTAAKMILQNSEAMVSIDMPAGPSEVLVIADKYANPVHVAADLLSQAEHGPDSQVVLVVAGDGVDLGAIEAEVSKQCSALPRGEFASKALGHSFTVFAKDMVEAISFSNMYAPEHLIINVKDAEQWEDLVENAGSVFLGQWTPESVGDYASGTNHVLPTYGYARMYSGVSLNSFLKYITVQSLSEEGLRSLGPHVAKMAEVEGLEAHRRAVTLRLQDIEATVTV.

The tract at residues Met1–Leu28 is disordered. Residues Tyr162, Gln224, and Asn247 each coordinate NAD(+). The substrate site is built by Ser273, Gln295, and His298. The Zn(2+) site is built by Gln295 and His298. Catalysis depends on proton acceptor residues Glu363 and His364. Positions 364, 397, 451, and 456 each coordinate substrate. Position 397 (Asp397) interacts with Zn(2+). Zn(2+) is bound at residue His456.

This sequence belongs to the histidinol dehydrogenase family. Requires Zn(2+) as cofactor.

It localises to the plastid. It is found in the chloroplast. The catalysed reaction is L-histidinol + 2 NAD(+) + H2O = L-histidine + 2 NADH + 3 H(+). The protein operates within amino-acid biosynthesis; L-histidine biosynthesis; L-histidine from 5-phospho-alpha-D-ribose 1-diphosphate: step 9/9. Catalyzes the sequential NAD-dependent oxidations of L-histidinol to L-histidinaldehyde and then to L-histidine. In Oryza sativa subsp. japonica (Rice), this protein is Histidinol dehydrogenase, chloroplastic (HDH).